The sequence spans 2944 residues: Collagen alpha-1(VII) chain (2944 aa).

The N-terminal stretch at 1-16 (MTLRLLVAALCAGILA) is a signal peptide. The nonhelical region (NC1) stretch occupies residues 17–1253 (EAPRVRAQHR…PEPCPVYCPK (1237 aa)). In terms of domain architecture, VWFA 1 spans 38–211 (DIVFLLDGSS…SILRTLLPLV (174 aa)). 9 Fibronectin type-III domains span residues 234–329 (APRD…TALE), 330–416 (GPEL…TDAS), 417–507 (VEQT…PELP), 510–597 (PVTD…EPET), 600–687 (AVPG…DPLG), 688–775 (PVRT…APEP), 778–866 (RVSR…PPEA), 869–957 (ALGT…SPRV), and 958–1051 (PSIE…CPRG). Asn337 is a glycosylation site (N-linked (GlcNAc...) asparagine). The tract at residues 632–651 (STGSGPESSQTLPPDSTATD) is disordered. N-linked (GlcNAc...) asparagine glycosylation occurs at Asn786. One can recognise a VWFA 2 domain in the interval 1054–1229 (DVVFLPHATQ…PSLDQAVSGL (176 aa)). N-linked (GlcNAc...) asparagine glycosylation occurs at Asn1109. 2 short sequence motifs (cell attachment site) span residues 1170–1172 (RGD) and 1334–1336 (RGD). Disordered regions lie at residues 1239-1941 (TTQP…SVPN), 1963-2782 (WDES…EKGE), and 2837-2872 (SHAEEEERVPPEDDEYSEYSEYSVEEYQDPEAPWDS). The segment at 1254–1477 (GQKGEPGEMG…GPRGPPGAIG (224 aa)) is interrupted collagenous region. The segment at 1254–2784 (GQKGEPGEMG…GPRGEKGEAA (1531 aa)) is triple-helical region. Basic and acidic residues predominate over residues 1336-1346 (DPGERGPRGPK). The segment covering 1355–1365 (VIGGEGPGLPG) has biased composition (gly residues). Over residues 1399 to 1408 (KGDKGDRGER) the composition is skewed to basic and acidic residues. The segment covering 1429 to 1440 (PGSPGPQGPVGP) has biased composition (pro residues). A compositionally biased stretch (low complexity) spans 1574 to 1583 (RGPPGLVLPG). 3 stretches are compositionally biased toward basic and acidic residues: residues 1630–1642 (RGRDGEVGEKGDE), 1669–1683 (VGEKGDQGDPGEDGR), and 1715–1733 (AREKGEPGDRGQEGPRGPK). Low complexity predominate over residues 1786-1802 (KPGAAGPSGPNGAAGKA). Positions 1852-1877 (EDGRKGEKGDSGASGREGRDGPKGER) are enriched in basic and acidic residues. Residues 1886 to 1897 (QGPPGLPGPVGP) are compositionally biased toward pro residues. Over residues 1898 to 1911 (PGQGFPGVPGGTGP) the composition is skewed to gly residues. A compositionally biased stretch (basic and acidic residues) spans 1974 to 1984 (PERRRGPKGDS). The short motif at 2008–2010 (RGD) is the Cell attachment site element. A 4-hydroxyproline mark is found at Pro2036 and Pro2039. Gly residues predominate over residues 2046–2055 (GRAGGVGEAG). Residues 2056–2074 (RPGERGERGEKGERGEQGR) are compositionally biased toward basic and acidic residues. Residues 2078 to 2092 (PGLPGTPGPPGPPGP) are compositionally biased toward pro residues. A 4-hydroxyproline mark is found at Pro2084, Pro2087, and Pro2090. Basic and acidic residues predominate over residues 2127–2143 (PKGDRGVPGIKGDRGEP). A 4-hydroxyproline mark is found at Pro2167, Pro2176, Pro2185, and Pro2188. Low complexity-rich tracts occupy residues 2191–2206 (PGLAGPAGPQGPSGLK) and 2235–2250 (SGLVGPQGSPGLPGQV). A compositionally biased stretch (basic and acidic residues) spans 2328–2346 (AKGDRGLPGPRGEKGEAGR). The segment covering 2387–2406 (VKGDLGLPGLPGAPGVVGFP) has biased composition (low complexity). The segment covering 2438–2448 (PLGPPGPPGSV) has biased composition (pro residues). 2 stretches are compositionally biased toward basic and acidic residues: residues 2471 to 2486 (RGERGEPGIRGEDGRP) and 2534 to 2570 (AKGDMGERGPRGLDGDKGPRGDNGDPGDKGSKGEPGD). A Cell attachment site motif is present at residues 2553-2555 (RGD). Residues 2573–2601 (SAGLPGLRGLLGPQGQPGAAGIPGDPGSP) show a composition bias toward low complexity. 5-hydroxylysine; alternate is present on residues Lys2625 and Lys2631. Residues Lys2625 and Lys2631 are each glycosylated (O-linked (Gal...) hydroxylysine; alternate). 4-hydroxyproline is present on residues Pro2664, Pro2667, and Pro2673. The span at 2704–2713 (GTPGIGGFPG) shows a compositional bias: gly residues. The segment covering 2749 to 2762 (GERVVGAPGVPGAP) has biased composition (low complexity). A nonhelical region (NC2) region spans residues 2785-2944 (LTEDDIRGFV…QSQGTGTAQD (160 aa)). Residues 2837 to 2847 (SHAEEEERVPP) are compositionally biased toward basic and acidic residues. A compositionally biased stretch (acidic residues) spans 2848–2872 (EDDEYSEYSEYSVEEYQDPEAPWDS). Residues 2872-2944 (SDDPCSLPLD…QSQGTGTAQD (73 aa)) enclose the BPTI/Kunitz inhibitor domain. Cystine bridges form between Cys2876–Cys2929, Cys2885–Cys2912, and Cys2904–Cys2925.

As to quaternary structure, homotrimer. Interacts with MIA3/TANGO1; facilitating its loading into transport carriers and subsequent secretion. In terms of processing, prolines at the third position of the tripeptide repeating unit (G-X-Y) are hydroxylated in some or all of the chains.

Its subcellular location is the secreted. The protein localises to the extracellular space. It localises to the extracellular matrix. It is found in the basement membrane. In terms of biological role, stratified squamous epithelial basement membrane protein that forms anchoring fibrils which may contribute to epithelial basement membrane organization and adherence by interacting with extracellular matrix (ECM) proteins such as type IV collagen. The chain is Collagen alpha-1(VII) chain (COL7A1) from Homo sapiens (Human).